The chain runs to 130 residues: Phosphoribosyl-AMP cyclohydrolase (130 aa).

D78 provides a ligand contact to Mg(2+). C79 is a Zn(2+) binding site. Mg(2+)-binding residues include D80 and D82. C96 and C103 together coordinate Zn(2+).

It belongs to the PRA-CH family. As to quaternary structure, homodimer. It depends on Mg(2+) as a cofactor. Zn(2+) is required as a cofactor.

The protein localises to the cytoplasm. It carries out the reaction 1-(5-phospho-beta-D-ribosyl)-5'-AMP + H2O = 1-(5-phospho-beta-D-ribosyl)-5-[(5-phospho-beta-D-ribosylamino)methylideneamino]imidazole-4-carboxamide. Its pathway is amino-acid biosynthesis; L-histidine biosynthesis; L-histidine from 5-phospho-alpha-D-ribose 1-diphosphate: step 3/9. Its function is as follows. Catalyzes the hydrolysis of the adenine ring of phosphoribosyl-AMP. This is Phosphoribosyl-AMP cyclohydrolase from Methylobacillus flagellatus (strain ATCC 51484 / DSM 6875 / VKM B-1610 / KT).